The sequence spans 519 residues: 2-isopropylmalate synthase (519 aa).

A Pyruvate carboxyltransferase domain is found at 12-274; the sequence is VVIFDTTLRD…WCNVESTMLT (263 aa). Positions 21, 209, 211, and 245 each coordinate Mn(2+). The tract at residues 398–519 is regulatory domain; sequence KLSSLTVIAG…QRDVPAAAAS (122 aa).

It belongs to the alpha-IPM synthase/homocitrate synthase family. LeuA type 1 subfamily. Homodimer. Requires Mn(2+) as cofactor.

The protein localises to the cytoplasm. It catalyses the reaction 3-methyl-2-oxobutanoate + acetyl-CoA + H2O = (2S)-2-isopropylmalate + CoA + H(+). It participates in amino-acid biosynthesis; L-leucine biosynthesis; L-leucine from 3-methyl-2-oxobutanoate: step 1/4. Functionally, catalyzes the condensation of the acetyl group of acetyl-CoA with 3-methyl-2-oxobutanoate (2-ketoisovalerate) to form 3-carboxy-3-hydroxy-4-methylpentanoate (2-isopropylmalate). In Nitrobacter winogradskyi (strain ATCC 25391 / DSM 10237 / CIP 104748 / NCIMB 11846 / Nb-255), this protein is 2-isopropylmalate synthase.